We begin with the raw amino-acid sequence, 56 residues long: Large ribosomal subunit protein bL32 (56 aa).

The segment at 1-21 (MGVPQRRQSHARKNKRRSEWR) is disordered. The segment covering 7–19 (RQSHARKNKRRSE) has biased composition (basic residues).

The protein belongs to the bacterial ribosomal protein bL32 family.

The chain is Large ribosomal subunit protein bL32 from Syntrophomonas wolfei subsp. wolfei (strain DSM 2245B / Goettingen).